We begin with the raw amino-acid sequence, 65 residues long: Beta-toxin Am IT (65 aa).

Pyrrolidone carboxylic acid (Glu); partial is present on Glu1. The region spanning 1–64 is the LCN-type CS-alpha/beta domain; the sequence is EHGYLLDKYT…LWNYKTNKCK (64 aa). Cystine bridges form between Cys12–Cys63, Cys16–Cys38, Cys23–Cys45, and Cys27–Cys47. Serine amide is present on Ser65.

Belongs to the long (4 C-C) scorpion toxin superfamily. Sodium channel inhibitor family. Expressed by the venom gland.

Its subcellular location is the secreted. Its function is as follows. Has a toxic effect on insects and mammals. On German cockroach larvae, it provokes contraction, paralysis and lethality. Intracerebroventricular injection into mice causes severe neurotoxic symptoms. It fully competes with the binding of the iodinated Css4 (AC P60266) on rat brain synaptosomes, with moderate affinity and in a concentration-dependent manner (EC(50)=25 nM). It may act on both site 3 and site 4 of voltage-gated sodium channels. In Androctonus mauritanicus mauritanicus (Scorpion), this protein is Beta-toxin Am IT.